Here is a 182-residue protein sequence, read N- to C-terminus: Troponin I, fast skeletal muscle (182 aa).

Glycine 2 is modified (N-acetylglycine). Residues glycine 2 to histidine 48 are involved in binding TNC. Threonine 12 carries the phosphothreonine; by PHK modification. The segment at asparagine 97–methionine 117 is involved in binding TNC and actin. Phosphoserine; by PKA is present on serine 118.

Belongs to the troponin I family. As to quaternary structure, binds to actin and tropomyosin.

In terms of biological role, troponin I is the inhibitory subunit of troponin, the thin filament regulatory complex which confers calcium-sensitivity to striated muscle actomyosin ATPase activity. This chain is Troponin I, fast skeletal muscle (TNNI2), found in Oryctolagus cuniculus (Rabbit).